The primary structure comprises 208 residues: Methylthioribulose-1-phosphate dehydratase (208 aa).

The Zn(2+) site is built by His-98 and His-100.

This sequence belongs to the aldolase class II family. MtnB subfamily. Zn(2+) serves as cofactor.

It catalyses the reaction 5-(methylsulfanyl)-D-ribulose 1-phosphate = 5-methylsulfanyl-2,3-dioxopentyl phosphate + H2O. The protein operates within amino-acid biosynthesis; L-methionine biosynthesis via salvage pathway; L-methionine from S-methyl-5-thio-alpha-D-ribose 1-phosphate: step 2/6. In terms of biological role, catalyzes the dehydration of methylthioribulose-1-phosphate (MTRu-1-P) into 2,3-diketo-5-methylthiopentyl-1-phosphate (DK-MTP-1-P). This chain is Methylthioribulose-1-phosphate dehydratase, found in Marinobacter nauticus (strain ATCC 700491 / DSM 11845 / VT8) (Marinobacter aquaeolei).